Reading from the N-terminus, the 132-residue chain is Large ribosomal subunit protein bL19 (132 aa).

It belongs to the bacterial ribosomal protein bL19 family.

In terms of biological role, this protein is located at the 30S-50S ribosomal subunit interface and may play a role in the structure and function of the aminoacyl-tRNA binding site. This Rhodospirillum centenum (strain ATCC 51521 / SW) protein is Large ribosomal subunit protein bL19.